We begin with the raw amino-acid sequence, 575 residues long: V-type ATP synthase alpha chain (575 aa).

G238 to T245 is an ATP binding site.

Belongs to the ATPase alpha/beta chains family.

It catalyses the reaction ATP + H2O + 4 H(+)(in) = ADP + phosphate + 5 H(+)(out). Produces ATP from ADP in the presence of a proton gradient across the membrane. The V-type alpha chain is a catalytic subunit. The protein is V-type ATP synthase alpha chain of Borreliella afzelii (strain PKo) (Borrelia afzelii).